The sequence spans 234 residues: Conidial surface nicotinamide adenine dinucleotide glycohydrolase nadA (234 aa).

Residues 1-20 form the signal peptide; sequence MIFTNAILVISALLPATVLS. The thump stretch occupies residues 21–117; that stretch reads LQHTEDSLFP…LDTEEQPILG (97 aa). Disulfide bonds link C33/C80 and C38/C50. N-linked (GlcNAc...) asparagine glycosylation is found at N45, N95, and N118. The TNT domain occupies 120 to 212; it reads TLPVGMKLDR…GLIDDGYLRR (93 aa). The active site involves R129. NAD(+)-binding residues include F130, T136, and R148. Residue Q194 is part of the active site. Ca(2+) is bound by residues S216, D219, E220, and E223.

This sequence belongs to the fungal surface NADase family. As to quaternary structure, homodimer. N-glycosylated.

The protein resides in the secreted. It catalyses the reaction NAD(+) + H2O = ADP-D-ribose + nicotinamide + H(+). It carries out the reaction NADP(+) + H2O = ADP-D-ribose 2'-phosphate + nicotinamide + H(+). The catalytic activity is positively regulated by calcium via its binding to the calcium-binding site. Functionally, conidial surface nicotinamide adenine dinucleotide glycohydrolase that cleave NAD(+) and NADP(+) but not their reduced counterparts, NADH and NADPH. Lacks both ADP-ribosyl cyclase and base exchange activity and does not mediate synthesis of calcium messengers cADPR or NAADP. Plays a role in pathogenicity by depleting the host's NAD(+) pool. The protein is Conidial surface nicotinamide adenine dinucleotide glycohydrolase nadA of Aspergillus fumigatus (strain ATCC MYA-4609 / CBS 101355 / FGSC A1100 / Af293) (Neosartorya fumigata).